Consider the following 410-residue polypeptide: Arginine deiminase (410 aa).

Catalysis depends on cysteine 400, which acts as the Amidino-cysteine intermediate.

It belongs to the arginine deiminase family.

It is found in the cytoplasm. It catalyses the reaction L-arginine + H2O = L-citrulline + NH4(+). The protein operates within amino-acid degradation; L-arginine degradation via ADI pathway; carbamoyl phosphate from L-arginine: step 1/2. The sequence is that of Arginine deiminase from Streptococcus agalactiae serotype III (strain NEM316).